A 305-amino-acid polypeptide reads, in one-letter code: tRNA dimethylallyltransferase (305 aa).

8–15 (GPTASGKT) provides a ligand contact to ATP. Position 10 to 15 (10 to 15 (TASGKT)) interacts with substrate. An interaction with substrate tRNA region spans residues 33-36 (DSQQ).

It belongs to the IPP transferase family. Monomer. Mg(2+) serves as cofactor.

The enzyme catalyses adenosine(37) in tRNA + dimethylallyl diphosphate = N(6)-dimethylallyladenosine(37) in tRNA + diphosphate. Catalyzes the transfer of a dimethylallyl group onto the adenine at position 37 in tRNAs that read codons beginning with uridine, leading to the formation of N6-(dimethylallyl)adenosine (i(6)A). This chain is tRNA dimethylallyltransferase, found in Anaeromyxobacter sp. (strain K).